A 466-amino-acid polypeptide reads, in one-letter code: cGMP-specific 3',5'-cGMP phosphodiesterase 3 (466 aa).

The span at 1–120 (MAPQQNIMKQ…NSNNNNSNNN (120 aa)) shows a compositional bias: low complexity. Residues 1–150 (MAPQQNIMKQ…NNNKIRGYND (150 aa)) are disordered. Residues 123–134 (DDEEEEGDDEDN) show a composition bias toward acidic residues. Over residues 135 to 150 (NNNNNSNNNKIRGYND) the composition is skewed to low complexity. Residues 137–458 (NNNSNNNKIR…EIWSNNGSSS (322 aa)) form the PDEase domain. The Proton donor role is filled by His-213. A divalent metal cation-binding residues include His-217, His-253, Asp-254, and Asp-364.

This sequence belongs to the cyclic nucleotide phosphodiesterase family. A divalent metal cation is required as a cofactor.

The protein localises to the cytoplasm. It is found in the cytosol. It carries out the reaction 3',5'-cyclic GMP + H2O = GMP + H(+). With respect to regulation, inhibited by 3-isobutyl-1-methylxanthine (IBMX). Functionally, phosphodiesterase specific for cGMP, which is not activated by cGMP. Involved in the degradation of intracellular cGMP. In Dictyostelium discoideum (Social amoeba), this protein is cGMP-specific 3',5'-cGMP phosphodiesterase 3 (pde3).